The sequence spans 301 residues: Fluoroquinolones export ATP-binding protein Rv2688c (301 aa).

In terms of domain architecture, ABC transporter spans 18 to 246 (IRVRGLTFRY…RSRRRVRVEY (229 aa)). 52–59 (GPSGAGKS) provides a ligand contact to ATP.

It belongs to the ABC transporter superfamily. As to quaternary structure, the complex is composed of 2 ATP-binding proteins (Rv2688c) and 2 transmembrane proteins (Rv2686c and Rv2687c).

The protein resides in the cell membrane. Inhibited by reserpine and verapamil. Part of the ABC transporter complex Rv2686c/Rv2687c/Rv2688c involved in fluoroquinolones export. Confers resistance to ciprofloxacin and, to a lesser extent, norfloxacin, moxifloxacin and sparfloxacin. Probably responsible for energy coupling to the transport system. This Mycobacterium tuberculosis (strain ATCC 25618 / H37Rv) protein is Fluoroquinolones export ATP-binding protein Rv2688c.